Reading from the N-terminus, the 770-residue chain is PH and SEC7 domain-containing protein 2 (770 aa).

A compositionally biased stretch (basic and acidic residues) spans 1–24 (MDEEKLPCELHKEGSATQEDHGLE). Disordered regions lie at residues 1–65 (MDEE…RGPD) and 181–304 (IQQR…ANGC). Polar residues predominate over residues 32–45 (QNGTAASEGLSSHI). Phosphoserine is present on S188. 2 stretches are compositionally biased toward low complexity: residues 216-234 (LGSPLRRSISSSRSENVLS) and 285-296 (ELSSSEGLEPGS). The SEC7 domain occupies 256 to 459 (DDEDDEDTDK…KTLYNSIKNE (204 aa)). The PH domain maps to 509–622 (TTYKHGVLTR…WILRINLVAA (114 aa)). The helical transmembrane segment at 619-636 (LVAAIFSAPAFPAAVSSM) threads the bilayer. The stretch at 650–677 (RLCQEEQLRSHENKLRQVTAELAEHRCH) forms a coiled coil. Residues 738 to 770 (PALRKTHSSPALSLGHGPVTGSKATKDTSASDT) are disordered.

Belongs to the PSD family.

Its subcellular location is the cell membrane. The protein localises to the cell projection. It localises to the ruffle membrane. The protein resides in the cleavage furrow. This Mus musculus (Mouse) protein is PH and SEC7 domain-containing protein 2 (Psd2).